We begin with the raw amino-acid sequence, 1198 residues long: Phosphatidylinositol-3,5-bisphosphate 3-phosphatase MTMR3 (1198 aa).

Ser8 is subject to Phosphoserine. The region spanning 155–576 is the Myotubularin phosphatase domain; sequence EHVTSRFKNE…RNLMLWSAVY (422 aa). Residues 265-280 are compositionally biased toward polar residues; it reads SRSSGSKLSTRNTSRD. Residues 265 to 285 form a disordered region; it reads SRSSGSKLSTRNTSRDFPNGG. 3 residues coordinate a 1,2-diacyl-sn-glycero-3-phospho-(1D-myo-inositol-3,5-bisphosphate): Asn326, Asn351, and Ile352. 3 residues coordinate a 1,2-diacyl-sn-glycero-3-phospho-(1D-myo-inositol-3-phosphate): Asn326, Asn351, and Ile352. Cys413 acts as the Phosphocysteine intermediate in catalysis. A 1,2-diacyl-sn-glycero-3-phospho-(1D-myo-inositol-3,5-bisphosphate)-binding residues include Ser414, Asp415, Gly416, Trp417, Asp418, Arg419, Lys455, and Arg459. Positions 414, 415, 416, 417, 418, and 419 each coordinate a 1,2-diacyl-sn-glycero-3-phospho-(1D-myo-inositol-3-phosphate). Residue Arg459 coordinates a 1,2-diacyl-sn-glycero-3-phospho-(1D-myo-inositol-3-phosphate). A disordered region spans residues 590–612; that stretch reads CAPYPAPGTSPDDPPLSRLPKTR. Residues 593-603 are compositionally biased toward pro residues; sequence YPAPGTSPDDP. Phosphoserine occurs at positions 613, 633, 647, and 651. Disordered regions lie at residues 650–669, 716–735, and 855–891; these read LSSLAGPGEDPLSADSLGKP, EGKEDPLLEKESRRKTPEAS, and KSVSGPQGHHRSCLVNSGKDRLPQTMEPSPSETSLVE. A compositionally biased stretch (basic and acidic residues) spans 716 to 732; that stretch reads EGKEDPLLEKESRRKTP. Thr731 carries the phosphothreonine modification. 2 positions are modified to phosphoserine: Ser906 and Ser909. Disordered regions lie at residues 933 to 974 and 993 to 1019; these read ETEN…SRQL and WLHSHSGRPSATSSPDQPSRSHLDDDG. Residues 999–1010 show a composition bias toward polar residues; it reads GRPSATSSPDQP. Residues 1029–1062 adopt a coiled-coil conformation; it reads QRLRQIESGHQQEVETLKKQVQELKSRLESQYLT. The residue at position 1064 (Ser1064) is a Phosphoserine. Residues 1119-1179 form an FYVE-type zinc finger; that stretch reads DHLAAHCYAC…VCKSCYSSLH (61 aa). Zn(2+)-binding residues include Cys1125, Cys1128, Cys1141, Cys1144, Cys1149, Cys1152, Cys1171, and Cys1174.

Belongs to the protein-tyrosine phosphatase family. Non-receptor class myotubularin subfamily. Forms heterodimers with MTMR4 that recruit both CEP55 and PLK1; occurs during early mitosis, regulates the phosphorylation of CEP55 by PLK1 and its recruitment to the midbody where it mediates cell abscission. In terms of processing, phosphorylated by CDK1 during mitosis.

Its subcellular location is the cytoplasm. The protein resides in the cytosol. The protein localises to the membrane. The enzyme catalyses a 1,2-diacyl-sn-glycero-3-phospho-(1D-myo-inositol-3,5-bisphosphate) + H2O = a 1,2-diacyl-sn-glycero-3-phospho-(1D-myo-inositol-5-phosphate) + phosphate. The catalysed reaction is a 1,2-diacyl-sn-glycero-3-phospho-(1D-myo-inositol-3-phosphate) + H2O = a 1,2-diacyl-sn-glycero-3-phospho-(1D-myo-inositol) + phosphate. It carries out the reaction 1,2-dihexadecanoyl-sn-glycero-3-phospho-(1D-myo-inositol-3-phosphate) + H2O = 1,2-dihexadecanoyl-sn-glycero-3-phospho-(1D-myo-inositol) + phosphate. It catalyses the reaction 1,2-dioctanoyl-sn-glycero-3-phospho-(1-D-myo-inositol-3-phosphate) + H2O = 1,2-dioctanoyl-sn-glycero-3-phospho-(1D-myo-inositol) + phosphate. The enzyme catalyses 1,2-dihexadecanoyl-sn-glycero-3-phospho-(1D-myo-inositol-3,5-phosphate) + H2O = 1,2-dihexadecanoyl-sn-glycero-3-phospho-(1D-myo-inositol-5-phosphate) + phosphate. Functionally, lipid phosphatase that specifically dephosphorylates the D-3 position of phosphatidylinositol 3-phosphate and phosphatidylinositol 3,5-bisphosphate, generating phosphatidylinositol and phosphatidylinositol 5-phosphate. Decreases the levels of phosphatidylinositol 3-phosphate, a phospholipid found in cell membranes where it acts as key regulator of both cell signaling and intracellular membrane traffic. Could also have a molecular sequestering/adapter activity and regulate biological processes independently of its phosphatase activity. It includes the regulation of midbody abscission during mitotic cytokinesis. The protein is Phosphatidylinositol-3,5-bisphosphate 3-phosphatase MTMR3 of Homo sapiens (Human).